The following is a 369-amino-acid chain: WAT1-related protein At3g53210 (369 aa).

10 helical membrane passes run 12–31 (IAMVVFQTGYAGNHVIMRYA), 39–59 (LVFPLYRTIVAFSVLAPSAYF), 72–92 (FLIQFFLLGLVGITLNQGFYI), 103–123 (ASATENVVPAVSFLMAALLGI), 133–153 (GIAKVVGTIVSVAGSLVITLY), 182–202 (WTLGCLCLMGHCLCWSSWIVL), 214–234 (FSFVSYSCFFAVIQFFGISAY), 252–272 (ALLYTGLVGSAMVFAIQIYVV), 278–298 (LFVSAYLPLQTLIAAVLATLA), and 303–323 (FYLGGLIGAILIMSGLYLVVM). 2 EamA domains span residues 24–150 (NHVI…SLVI) and 194–323 (LCWS…LVVM). The disordered stretch occupies residues 348–369 (GDEEDYHNNKPRSPISQPLISS).

The protein belongs to the drug/metabolite transporter (DMT) superfamily. Plant drug/metabolite exporter (P-DME) (TC 2.A.7.4) family.

It is found in the membrane. The protein is WAT1-related protein At3g53210 of Arabidopsis thaliana (Mouse-ear cress).